The following is a 382-amino-acid chain: Hyaluronidase (382 aa).

The or 24 signal peptide spans 1–28; the sequence is MSRPLVITEGMMIGVLLMLAPINALLLG. Positions 29-33 are excised as a propeptide; sequence FVQST. 2 cysteine pairs are disulfide-bonded: Cys-54–Cys-345 and Cys-221–Cys-233. An N-linked (GlcNAc...) asparagine glycan is attached at Asn-115. The active-site Proton donor is the Glu-145. N-linked (GlcNAc...) (complex) asparagine glycosylation is present at Asn-263.

It belongs to the glycosyl hydrolase 56 family. Homotetramer. In terms of processing, N-glycosylated. Glycans found include a majority of small oligosaccharides (Man1-3GlcNAc2), most of which are either alpha 1,3-monofucosylated or alpha 1,3-(alpha 1,6-)difucosylated at the innermost GlcNAc residue, approximately 5% of high-mannose type structures, and 8% contains the terminal trisaccharide GalNAc beta 1-4[Fuc alpha 1-3]GlcNAc beta 1-in beta 1,2-linkage to the core alpha 1,3-mannosyl residue. As to expression, expressed in the venom glands of worker bees. It is also detected in the testes of drones but not in the queen-bee venom glands or in pupae.

The protein resides in the secreted. The catalysed reaction is Random hydrolysis of (1-&gt;4)-linkages between N-acetyl-beta-D-glucosamine and D-glucuronate residues in hyaluronate.. Its function is as follows. Hydrolyzes high molecular weight hyaluronic acid to produce small oligosaccharides. The protein is Hyaluronidase of Apis mellifera (Honeybee).